The sequence spans 169 residues: Probable actin-related protein 2/3 complex subunit 4 (169 aa).

The protein belongs to the ARPC4 family. As to quaternary structure, component of the Arp2/3 complex, at least composed of arx-1, arx-2, arx-4 and arx-6.

Its subcellular location is the cytoplasm. It localises to the cytoskeleton. Functionally, functions as actin-binding component of the Arp2/3 complex which is involved in regulation of actin polymerization and together with an activating nucleation-promoting factor (NPF) mediates the formation of branched actin networks. Seems to contact the mother actin filament. Plays a role in time-dependent memory loss and the retention of conditioned behavior over time. This chain is Probable actin-related protein 2/3 complex subunit 4, found in Caenorhabditis elegans.